The following is a 227-amino-acid chain: uncharacterized protein (227 aa).

An N-terminal signal peptide occupies residues M1–A23. A VWFA domain is found at N36–K227.

It to B.subtilis YwmD.

This is an uncharacterized protein from Bacillus subtilis (strain 168).